A 192-amino-acid chain; its full sequence is Pyridoxal 5'-phosphate synthase subunit PdxT (192 aa).

47–49 (GES) contributes to the L-glutamine binding site. The active-site Nucleophile is the Cys79. L-glutamine-binding positions include Arg106 and 134-135 (IR). Catalysis depends on charge relay system residues His170 and Glu172.

This sequence belongs to the glutaminase PdxT/SNO family. In terms of assembly, in the presence of PdxS, forms a dodecamer of heterodimers. Only shows activity in the heterodimer.

It carries out the reaction aldehydo-D-ribose 5-phosphate + D-glyceraldehyde 3-phosphate + L-glutamine = pyridoxal 5'-phosphate + L-glutamate + phosphate + 3 H2O + H(+). The catalysed reaction is L-glutamine + H2O = L-glutamate + NH4(+). It participates in cofactor biosynthesis; pyridoxal 5'-phosphate biosynthesis. Its function is as follows. Catalyzes the hydrolysis of glutamine to glutamate and ammonia as part of the biosynthesis of pyridoxal 5'-phosphate. The resulting ammonia molecule is channeled to the active site of PdxS. The protein is Pyridoxal 5'-phosphate synthase subunit PdxT of Anoxybacillus flavithermus (strain DSM 21510 / WK1).